A 126-amino-acid chain; its full sequence is UPF0738 protein BH2850 (126 aa).

The protein belongs to the UPF0738 family.

This chain is UPF0738 protein BH2850, found in Halalkalibacterium halodurans (strain ATCC BAA-125 / DSM 18197 / FERM 7344 / JCM 9153 / C-125) (Bacillus halodurans).